The following is a 595-amino-acid chain: Threonine dehydratase 2 biosynthetic, chloroplastic (595 aa).

The N-terminal 51 residues, 1-51, are a transit peptide targeting the chloroplast; sequence MEFLCLAPTRSFSTNPKLTKSIPSDHTSTTSRIFTYQNMRGSTMRPLALPL. Lys143 is modified (N6-(pyridoxal phosphate)lysine). ACT-like domains follow at residues 420-492 and 514-585; these read ALLA…NLSH and IFGE…LDNY.

It belongs to the serine/threonine dehydratase family. Homotetramer. Requires pyridoxal 5'-phosphate as cofactor. Proteolytically cleaved by a chymotrypsin-like digestive protease in the midgut of the lepidopteran insects to remove the C-terminal regulatory domain, which allows efficient metabolizing of threonine in the presence of high isoleucine levels in the gut. In terms of tissue distribution, expressed in floral buds, 8-9 mm long flowers 1 to 2 days before anthesis, open flowers and floral organs including sepals, petals, stamens and carpels of 8-9 mm flowers (at protein level). Expressed in very early floral meristems of the anantha. Over 500-fold expression in mature flowers compared to leaves. Expressed in sepals, petals, stamens and carpels of the mature flower. In sepals, mostly expressed in the abaxial mesophyll cells and in petals in parenchymal cells. Not expressed in epidermal or vascular tissues of sepals and petals. In stamens, expressed in parenchymal cells of the connective and lobes, but not expressed in differentiated tissues such as tapetum (TP), stomium (SM), or pollen grains (PG). Not expressed in roots or seeds. High level of expression in immature flower buds, unopened flowers and opened flowers. Not expressed in unstressed leaves, root, stem or petiole.

It localises to the plastid. The protein localises to the chloroplast. The enzyme catalyses L-threonine = 2-oxobutanoate + NH4(+). It carries out the reaction L-serine = pyruvate + NH4(+). It participates in amino-acid biosynthesis; L-isoleucine biosynthesis; 2-oxobutanoate from L-threonine: step 1/1. With respect to regulation, threonine dehydratase 2 biosynthetic, chloroplastic: Strongly inhibited by 1 mM isoleucine. Processed threonine dehydratase 2: Not inhibited by isoleucine. Not required for normal growth and development of the plant. In terms of biological role, involved in defense against lepidopteran, but not coleopteran herbivore insects. Acts in the insect gut to degrade threonine, which is an essential and limiting nutrient for the growth of lepidopteran larvae. Active against both L-threonine and L-serine. The polypeptide is Threonine dehydratase 2 biosynthetic, chloroplastic (Solanum lycopersicum (Tomato)).